Reading from the N-terminus, the 451-residue chain is Phosphoglucosamine mutase (451 aa).

The active-site Phosphoserine intermediate is Ser-107. Mg(2+) contacts are provided by Ser-107, Asp-246, Asp-248, and Asp-250. Ser-107 carries the post-translational modification Phosphoserine.

This sequence belongs to the phosphohexose mutase family. Mg(2+) serves as cofactor. In terms of processing, activated by phosphorylation.

It catalyses the reaction alpha-D-glucosamine 1-phosphate = D-glucosamine 6-phosphate. In terms of biological role, catalyzes the conversion of glucosamine-6-phosphate to glucosamine-1-phosphate. The chain is Phosphoglucosamine mutase from Burkholderia multivorans (strain ATCC 17616 / 249).